The primary structure comprises 452 residues: Cobyrinate a,c-diamide synthase (452 aa).

The 194-residue stretch at 246 to 439 folds into the GATase cobBQ-type domain; it reads TLAYALDDAF…LHVHFYQDEQ (194 aa). The active-site Nucleophile is C328.

It belongs to the CobB/CbiA family. The cofactor is Mg(2+).

It catalyses the reaction cob(II)yrinate + 2 L-glutamine + 2 ATP + 2 H2O = cob(II)yrinate a,c diamide + 2 L-glutamate + 2 ADP + 2 phosphate + 2 H(+). It participates in cofactor biosynthesis; adenosylcobalamin biosynthesis; cob(II)yrinate a,c-diamide from sirohydrochlorin (anaerobic route): step 10/10. Catalyzes the ATP-dependent amidation of the two carboxylate groups at positions a and c of cobyrinate, using either L-glutamine or ammonia as the nitrogen source. The chain is Cobyrinate a,c-diamide synthase from Streptococcus sanguinis (strain SK36).